The chain runs to 431 residues: Adenylosuccinate synthetase 2 (431 aa).

Residues 13 to 19 and 41 to 43 contribute to the GTP site; these read GDEGKGK and GHT. The active-site Proton acceptor is the D14. Residues D14 and G41 each coordinate Mg(2+). IMP is bound by residues 14-17, 39-42, T130, R144, Q225, T240, and R304; these read DEGK and NAGH. H42 (proton donor) is an active-site residue. 300–306 is a binding site for substrate; that stretch reads SVTGRPR. GTP-binding positions include R306, 332–334, and 414–416; these read KLD and STG.

Belongs to the adenylosuccinate synthetase family. Homodimer. Mg(2+) serves as cofactor.

It localises to the cytoplasm. It catalyses the reaction IMP + L-aspartate + GTP = N(6)-(1,2-dicarboxyethyl)-AMP + GDP + phosphate + 2 H(+). It participates in purine metabolism; AMP biosynthesis via de novo pathway; AMP from IMP: step 1/2. In terms of biological role, plays an important role in the de novo pathway of purine nucleotide biosynthesis. Catalyzes the first committed step in the biosynthesis of AMP from IMP. The polypeptide is Adenylosuccinate synthetase 2 (Chromobacterium violaceum (strain ATCC 12472 / DSM 30191 / JCM 1249 / CCUG 213 / NBRC 12614 / NCIMB 9131 / NCTC 9757 / MK)).